The chain runs to 318 residues: Myeloid-associated differentiation marker (318 aa).

2 MARVEL domains span residues 25 to 157 and 162 to 315; these read ALTQ…ARPG and YMAT…RLVF. A run of 8 helical transmembrane segments spans residues 35-55, 58-78, 95-115, 131-151, 165-185, 197-217, 233-253, and 290-310; these read LLQLVSTCVAFSLVASVGAWT, MGNWAMFTWCFCFAVTLIILI, FPITFACYAALFCLSSSIIYP, AIAATTFSCVACLAYATEVAW, TVPGLLKVFETFVACIIFAFI, LEWCVAVYAICFILAAVTVLL, FLSGLALLSVLLYATAIVLWP, and LAVSILTGINLLAYVSDLVYS.

The protein belongs to the MAL family.

The protein resides in the membrane. This is Myeloid-associated differentiation marker (Myadm) from Rattus norvegicus (Rat).